The primary structure comprises 215 residues: Uracil phosphoribosyltransferase (215 aa).

5-phospho-alpha-D-ribose 1-diphosphate is bound by residues Arg84, Arg109, and 136-144; that span reads DPMLATGNT. Uracil is bound by residues Ile198 and 203–205; that span reads GDA. Asp204 serves as a coordination point for 5-phospho-alpha-D-ribose 1-diphosphate.

This sequence belongs to the UPRTase family. Mg(2+) is required as a cofactor.

It catalyses the reaction UMP + diphosphate = 5-phospho-alpha-D-ribose 1-diphosphate + uracil. It participates in pyrimidine metabolism; UMP biosynthesis via salvage pathway; UMP from uracil: step 1/1. Allosterically activated by GTP. Functionally, catalyzes the conversion of uracil and 5-phospho-alpha-D-ribose 1-diphosphate (PRPP) to UMP and diphosphate. The chain is Uracil phosphoribosyltransferase from Methanothermobacter thermautotrophicus (strain ATCC 29096 / DSM 1053 / JCM 10044 / NBRC 100330 / Delta H) (Methanobacterium thermoautotrophicum).